Consider the following 270-residue polypeptide: MRLIIQPDYQSVSQWAAHYVAAKIKAANPTPEKPFVLGCPTGSSPLGMYKALIDLNKKGIVSFQNVVTFNMDEYVGLPKEHPESYYSFMWNNFFSHIDIKKENTNILNGNAPDLDAECARYEEKIKSYGGIDLFMGGIGPDGHIAFNEPGSSLTSRTRQKTLTTDTIIANSRFFDNDINKVPKTALTVGVGTVLSAKEVMIIVNGHNKARALYHAVEGSITQMWTISALQMHEKGIIVCDDAATEELKVGTYRYFKDIEAGHLDPESLIK.

Aspartate 72 acts as the Proton acceptor; for enolization step in catalysis. Residue aspartate 141 is the For ring-opening step of the active site. Residue histidine 143 is the Proton acceptor; for ring-opening step of the active site. Glutamate 148 functions as the For ring-opening step in the catalytic mechanism.

It belongs to the glucosamine/galactosamine-6-phosphate isomerase family. NagB subfamily.

The catalysed reaction is alpha-D-glucosamine 6-phosphate + H2O = beta-D-fructose 6-phosphate + NH4(+). It participates in amino-sugar metabolism; N-acetylneuraminate degradation; D-fructose 6-phosphate from N-acetylneuraminate: step 5/5. Its activity is regulated as follows. Allosterically activated by N-acetylglucosamine 6-phosphate (GlcNAc6P). Functionally, catalyzes the reversible isomerization-deamination of glucosamine 6-phosphate (GlcN6P) to form fructose 6-phosphate (Fru6P) and ammonium ion. The sequence is that of Glucosamine-6-phosphate deaminase (nagB) from Bacteroides thetaiotaomicron (strain ATCC 29148 / DSM 2079 / JCM 5827 / CCUG 10774 / NCTC 10582 / VPI-5482 / E50).